We begin with the raw amino-acid sequence, 95 residues long: Phosphoribosyl-ATP pyrophosphatase (95 aa).

This sequence belongs to the PRA-PH family.

The protein localises to the cytoplasm. It carries out the reaction 1-(5-phospho-beta-D-ribosyl)-ATP + H2O = 1-(5-phospho-beta-D-ribosyl)-5'-AMP + diphosphate + H(+). It participates in amino-acid biosynthesis; L-histidine biosynthesis; L-histidine from 5-phospho-alpha-D-ribose 1-diphosphate: step 2/9. The protein is Phosphoribosyl-ATP pyrophosphatase of Methanocella arvoryzae (strain DSM 22066 / NBRC 105507 / MRE50).